Here is a 525-residue protein sequence, read N- to C-terminus: MTENIHKHRILILDFGSQYTQLVARRVRELGVYCELWAWDVTEAQIRDFNPSGIILSGGPESTTEENSPRAPQYVFEAGVPVFGVCYGMQTMAMQLGGHVEASNEREFGYAQVEVVNDSALVRGIEDALTADGKPLLDVWMSHGDKVTAIPSDFVTVASTESCPFAIMANEEKRFYGVQFHPEVTHTRQGMRMLERFVRDICQCEALWTPAKIIDDAVARIREQVGDDKVILGLSGGVDSSVTAMLLHRAIGKNLTCVFVDNGLLRLNEAEQVLDMFGDHFGLNIVHVPAEDRFLSALAGENDPEAKRKIIGRVFVEVFDEEALKLEDVKWLAQGTIYPDVIESAASATGKAHVIKSHHNVGGLPKEMKMGLVEPLKELFKDEVRKIGLELGLPYDMLYRHPFPGPGLGVRVLGEVKKEYCDLLRRADAIFIEELRKADLYDKVSQAFTVFLPVRSVGVMGDGRKYDWVVSLRAVETIDFMTAHWARLPYDFLGRVSNRIINEVNGISRVVYDISGKPPATIEWE.

In terms of domain architecture, Glutamine amidotransferase type-1 spans 9 to 207 (RILILDFGSQ…VRDICQCEAL (199 aa)). C86 (nucleophile) is an active-site residue. Active-site residues include H181 and E183. The GMPS ATP-PPase domain maps to 208-400 (WTPAKIIDDA…LGLPYDMLYR (193 aa)). ATP is bound at residue 235–241 (SGGVDSS).

As to quaternary structure, homodimer.

The enzyme catalyses XMP + L-glutamine + ATP + H2O = GMP + L-glutamate + AMP + diphosphate + 2 H(+). It functions in the pathway purine metabolism; GMP biosynthesis; GMP from XMP (L-Gln route): step 1/1. Functionally, catalyzes the synthesis of GMP from XMP. In Shigella sonnei (strain Ss046), this protein is GMP synthase [glutamine-hydrolyzing].